Here is a 267-residue protein sequence, read N- to C-terminus: Methylglyoxal reductase DkgB (267 aa).

Y39 acts as the Proton donor in catalysis. H97 contributes to the substrate binding site. 179–231 (MTLAYGKALKDEVIARIAVKHNATPVQVILAWAMGEGYSVIPSSTRRENLASN) contributes to the NADP(+) binding site.

It belongs to the aldo/keto reductase family. As to quaternary structure, monomer.

It is found in the cytoplasm. It carries out the reaction hydroxyacetone + NADP(+) = methylglyoxal + NADPH + H(+). Its function is as follows. Aldo-keto reductase that significantly contributes to cellular methylglyoxal detoxification by catalyzing the NADPH-dependent conversion of methylglyoxal to acetol. In Salmonella typhi, this protein is Methylglyoxal reductase DkgB.